Here is a 356-residue protein sequence, read N- to C-terminus: MAGLKLQAVTKSWDGKTQVIKPLTLDVADGEFIVMVGPSGCGKSTLLRMVAGLERVTEGDICINDQRVTEMEPKDRGIAMVFQNYALYPHMSVEENMAWGLKIRGMGKQQIAERVKEAARILELDGLLKRRPRELSGGQRQRVAMGRAIVRDPAVFLFDEPLSNLDAKLRVQMRLELQQLHRRLKTTSLYVTHDQVEAMTLAQRVMVMNGGVAEQIGTPVEVYEKPASLFVASFIGSPAMNLLTGRVNNEGTHFELDGGIALPLNGGYRQYAGRKMTLGIRPEHIALSSQAEGGVPLVMDTLEILGADNLAHGRWGEQKLVVRLAHQERPTAGSTLWLHLPENQLHLFDGETGQRV.

In terms of domain architecture, ABC transporter spans 4-235; the sequence is LKLQAVTKSW…PASLFVASFI (232 aa). 37 to 44 lines the ATP pocket; sequence GPSGCGKS.

This sequence belongs to the ABC transporter superfamily. sn-glycerol-3-phosphate importer (TC 3.A.1.1.3) family. In terms of assembly, the complex is composed of two ATP-binding proteins (UgpC), two transmembrane proteins (UgpA and UgpE) and a solute-binding protein (UgpB).

The protein localises to the cell inner membrane. It catalyses the reaction sn-glycerol 3-phosphate(out) + ATP + H2O = sn-glycerol 3-phosphate(in) + ADP + phosphate + H(+). Functionally, part of the ABC transporter complex UgpBAEC involved in sn-glycerol-3-phosphate (G3P) import. Responsible for energy coupling to the transport system. In Escherichia coli O157:H7, this protein is sn-glycerol-3-phosphate import ATP-binding protein UgpC.